The sequence spans 578 residues: Proline--tRNA ligase (578 aa).

It belongs to the class-II aminoacyl-tRNA synthetase family. ProS type 1 subfamily. Homodimer.

Its subcellular location is the cytoplasm. The enzyme catalyses tRNA(Pro) + L-proline + ATP = L-prolyl-tRNA(Pro) + AMP + diphosphate. Functionally, catalyzes the attachment of proline to tRNA(Pro) in a two-step reaction: proline is first activated by ATP to form Pro-AMP and then transferred to the acceptor end of tRNA(Pro). As ProRS can inadvertently accommodate and process non-cognate amino acids such as alanine and cysteine, to avoid such errors it has two additional distinct editing activities against alanine. One activity is designated as 'pretransfer' editing and involves the tRNA(Pro)-independent hydrolysis of activated Ala-AMP. The other activity is designated 'posttransfer' editing and involves deacylation of mischarged Ala-tRNA(Pro). The misacylated Cys-tRNA(Pro) is not edited by ProRS. The sequence is that of Proline--tRNA ligase from Burkholderia cenocepacia (strain HI2424).